A 438-amino-acid polypeptide reads, in one-letter code: Glucose-6-phosphate isomerase (438 aa).

The active-site Proton donor is E289. Catalysis depends on residues H310 and K424.

The protein belongs to the GPI family.

It localises to the cytoplasm. The catalysed reaction is alpha-D-glucose 6-phosphate = beta-D-fructose 6-phosphate. It participates in carbohydrate biosynthesis; gluconeogenesis. Its pathway is carbohydrate degradation; glycolysis; D-glyceraldehyde 3-phosphate and glycerone phosphate from D-glucose: step 2/4. Functionally, catalyzes the reversible isomerization of glucose-6-phosphate to fructose-6-phosphate. In Oenococcus oeni (strain ATCC BAA-331 / PSU-1), this protein is Glucose-6-phosphate isomerase.